The sequence spans 391 residues: ATP-sensitive inward rectifier potassium channel 1 (391 aa).

The Cytoplasmic portion of the chain corresponds to 1–77 (MNASSRNVFD…IWTTVLDLKW (77 aa)). A Phosphoserine; by SGK1 modification is found at serine 44. The chain crosses the membrane as a helical span at residues 78–102 (RYKMTIFITAFLGSWFFFGLLWYAV). At 103 to 127 (AYIHKDLPEFHPSANHTPCVENING) the chain is on the extracellular side. Asparagine 117 carries N-linked (GlcNAc...) asparagine glycosylation. The helical; Pore-forming intramembrane region spans 128–139 (LTSAFLFSLETQ). Residues 140-146 (VTIGYGF) constitute an intramembrane region (pore-forming). Residues 141-146 (TIGYGF) carry the Selectivity filter motif. Over 147–155 (RCVTEQCAT) the chain is Extracellular. Residues 156 to 177 (AIFLLIFQSILGVIINSFMCGA) traverse the membrane as a helical segment. Over 178 to 391 (ILAKISRPKK…EVNETDDTKM (214 aa)) the chain is Cytoplasmic. Residues 180-207 (AKISRPKKRAKTITFSKNAVISKRGGKL) form a polyphosphoinositide (PIP2)-binding region. Position 223-230 (223-230 (GSHIYGKL)) interacts with ATP.

The protein belongs to the inward rectifier-type potassium channel (TC 1.A.2.1) family. KCNJ1 subfamily. As to quaternary structure, interacts with SGK1 and SLC9A3R2/NHERF2. Phosphorylation at Ser-44 by SGK1 is necessary for its expression at the cell membrane. In the kidney and pancreatic islets. Lower levels in skeletal muscle, pancreas, spleen, brain, heart and liver.

Its subcellular location is the cell membrane. It catalyses the reaction K(+)(in) = K(+)(out). Its activity is regulated as follows. Inhibited by WNK3. Activated by phosphatidylinositol 4,5 biphosphate (PtdIns(4,5)P2). Functionally, inward rectifier potassium channels are characterized by a greater tendency to allow potassium to flow into the cell rather than out of it. Their voltage dependence is regulated by the concentration of extracellular potassium; as external potassium is raised, the voltage range of the channel opening shifts to more positive voltages. The inward rectification is mainly due to the blockage of outward current by internal magnesium. This channel is activated by internal ATP and can be blocked by external barium. In the kidney, probably plays a major role in potassium homeostasis. This is ATP-sensitive inward rectifier potassium channel 1 (KCNJ1) from Homo sapiens (Human).